The chain runs to 832 residues: Beta-galactosidase (832 aa).

Residues methionine 1–alanine 25 form the signal peptide. Glutamate 183 functions as the Proton donor in the catalytic mechanism. Residue glutamate 252 is the Nucleophile of the active site. The SUEL-type lectin domain maps to alanine 741–glutamate 832.

It belongs to the glycosyl hydrolase 35 family.

The protein localises to the secreted. It localises to the extracellular space. Its subcellular location is the apoplast. The enzyme catalyses Hydrolysis of terminal non-reducing beta-D-galactose residues in beta-D-galactosides.. The protein is Beta-galactosidase of Asparagus officinalis (Garden asparagus).